Here is a 443-residue protein sequence, read N- to C-terminus: D(2) dopamine receptor (443 aa).

At 1-37 (MDPLNLSWYDDDLESQNWSRPFNGSEGKPGKPHYNYY) the chain is on the extracellular side. 3 N-linked (GlcNAc...) asparagine glycosylation sites follow: asparagine 5, asparagine 17, and asparagine 23. The chain crosses the membrane as a helical span at residues 38 to 60 (AMLLTLLIFIIVFGNVLVCMAVS). Residues 61-70 (REKALQTTTN) lie on the Cytoplasmic side of the membrane. Residues 71 to 93 (YLIVSLAVADLLVATLVMPWVVY) form a helical membrane-spanning segment. Over 94 to 108 (LEVVGEWKFSRIHCD) the chain is Extracellular. A disulfide bridge links cysteine 107 with cysteine 182. The chain crosses the membrane as a helical span at residues 109-130 (IFVTLDVMMCTASILNLCAISI). At 131–151 (DRYTAVAMPMLYNTRYSSKRR) the chain is on the cytoplasmic side. Residues 152-172 (VTVMIAIVWVLSFTISCPLLF) traverse the membrane as a helical segment. The Extracellular segment spans residues 173–188 (GLNNTDQNECIIANPA). The chain crosses the membrane as a helical span at residues 189 to 213 (FVVYSSIVSFYVPFIVTLLVYIKIY). The tract at residues 211-373 (KIYIVLRRRR…SQQKEKKATQ (163 aa)) is interaction with PPP1R9B. The Cytoplasmic segment spans residues 214–373 (IVLRRRRKRV…SQQKEKKATQ (160 aa)). Positions 282 to 332 (EMLSSTSPPERTRYSPIPPSHHQLTLPDPSHHGLHSTADSPAKPEKNGHAK) are disordered. Basic and acidic residues predominate over residues 323 to 332 (AKPEKNGHAK). The helical transmembrane segment at 374 to 395 (MLAIVLGVFIICWLPFFITHIL) threads the bilayer. The Extracellular portion of the chain corresponds to 396–409 (NIHCECNIPPVLYS). Cysteine 399 and cysteine 401 are disulfide-bonded. A helical membrane pass occupies residues 410-431 (AFTWLGYVNSAVNPIIYTTFNI). Residues 432 to 443 (EFRKAFLKILHC) are Cytoplasmic-facing. Residue cysteine 443 is the site of S-palmitoyl cysteine attachment.

Belongs to the G-protein coupled receptor 1 family. As to quaternary structure, forms homo- and heterooligomers with DRD4. The interaction with DRD4 may modulate agonist-induced downstream signaling. Interacts with CADPS and CADPS2. Interacts with GPRASP1, PPP1R9B and CLIC6. Interacts with ARRB2. Interacts with HTR2A. Interacts with DRD1. Interacts with KCNA2. Palmitoylated. Palmitoylation which is required for proper localization to the plasma membrane and stability of the receptor could be carried on by ZDHHC4, ZDHHC3 and ZDHHC8.

Its subcellular location is the cell membrane. The protein resides in the golgi apparatus membrane. Its function is as follows. Dopamine receptor whose activity is mediated by G proteins which inhibit adenylyl cyclase. Positively regulates postnatal regression of retinal hyaloid vessels via suppression of VEGFR2/KDR activity, downstream of OPN5. This is D(2) dopamine receptor (DRD2) from Canis lupus familiaris (Dog).